The following is a 508-amino-acid chain: uncharacterized protein (508 aa).

The protein resides in the virion. This is an uncharacterized protein from Acanthamoeba polyphaga mimivirus (APMV).